Here is a 196-residue protein sequence, read N- to C-terminus: Recombination protein RecR (196 aa).

The C4-type zinc finger occupies 57–72 (CERCHTFTEGAVCETC). A Toprim domain is found at 80-175 (TRLCVVETPA…HVTRLARGVP (96 aa)).

The protein belongs to the RecR family.

May play a role in DNA repair. It seems to be involved in an RecBC-independent recombinational process of DNA repair. It may act with RecF and RecO. The chain is Recombination protein RecR from Acidovorax sp. (strain JS42).